An 831-amino-acid polypeptide reads, in one-letter code: Probable basic-leucine zipper transcription factor P (831 aa).

Disordered regions lie at residues 1 to 33 (MNHRIEDITSNPSSPSPNSPFSSPQVSLQPSII) and 54 to 166 (NITS…IASR). Positions 54 to 85 (NITSSPSTSSSPPISTTTTTTTTTTTTATAKK) are enriched in low complexity. Over residues 87-96 (NSKEKKKTTN) the composition is skewed to basic and acidic residues. The span at 97-129 (KDNNNNNNNNNSNNQQQQQQQQQQQQQQQQQQQ) shows a compositional bias: low complexity. Positions 101–141 (NNNNNNNSNNQQQQQQQQQQQQQQQQQQQYEEEDDDEEDEG) form a coiled coil. A compositionally biased stretch (acidic residues) spans 130-143 (YEEEDDDEEDEGGD). Residues 144-154 (DNTKVGKGEKM) are compositionally biased toward basic and acidic residues. The 64-residue stretch at 151 to 214 (GEKMKARRTN…LELLKFSQEV (64 aa)) folds into the bZIP domain. The tract at residues 153 to 173 (KMKARRTNQNIASRNYRQRKK) is basic motif. A leucine-zipper region spans residues 176–183 (IKEMEDKI). Composition is skewed to low complexity over residues 469 to 484 (SSSSSSSSSSMSSSTS) and 497 to 510 (SSSNSSPSSLSASS). Disordered regions lie at residues 469–510 (SSSS…SASS), 658–697 (QQQAAQQQSPIQTQLSPPQHITPQHTPQQHIQQQQQHQNY), 715–771 (DATN…NTNK), and 787–810 (SLFSHQHQQQNSQSPTLPPSQNDS). A coiled-coil region spans residues 601-664 (AQQHAQQQAQ…QAAQQQAAQQ (64 aa)). Low complexity-rich tracts occupy residues 674–695 (PPQHITPQHTPQQHIQQQQQHQ), 720–750 (NNNNNNNNNNNNNNNNNNNNNNNNNNNNNNN), and 787–800 (SLFSHQHQQQNSQS).

This sequence belongs to the bZIP family.

It is found in the nucleus. Its function is as follows. Probable transcriptional regulator. This is Probable basic-leucine zipper transcription factor P (bzpP) from Dictyostelium discoideum (Social amoeba).